A 94-amino-acid chain; its full sequence is Large ribosomal subunit protein bL25 (94 aa).

Belongs to the bacterial ribosomal protein bL25 family. In terms of assembly, part of the 50S ribosomal subunit; part of the 5S rRNA/L5/L18/L25 subcomplex. Contacts the 5S rRNA. Binds to the 5S rRNA independently of L5 and L18.

This is one of the proteins that binds to the 5S RNA in the ribosome where it forms part of the central protuberance. This chain is Large ribosomal subunit protein bL25, found in Shigella boydii serotype 4 (strain Sb227).